The sequence spans 137 residues: ATP synthase epsilon chain (137 aa).

It belongs to the ATPase epsilon chain family. As to quaternary structure, F-type ATPases have 2 components, CF(1) - the catalytic core - and CF(0) - the membrane proton channel. CF(1) has five subunits: alpha(3), beta(3), gamma(1), delta(1), epsilon(1). CF(0) has three main subunits: a, b and c.

Its subcellular location is the cellular thylakoid membrane. Functionally, produces ATP from ADP in the presence of a proton gradient across the membrane. The sequence is that of ATP synthase epsilon chain (atpC) from Nostoc sp. (strain PCC 7120 / SAG 25.82 / UTEX 2576).